A 479-amino-acid chain; its full sequence is Chromosomal replication initiator protein DnaA (479 aa).

The tract at residues 1-94 (MKGGTMVENA…QTLWRTERED (94 aa)) is domain I, interacts with DnaA modulators. The interval 94–142 (DIKGVELQVKRGLPEVSMGDAEDGEDGSGEGHELATQAAAPESRSDLAV) is domain II. The interval 106–137 (LPEVSMGDAEDGEDGSGEGHELATQAAAPESR) is disordered. Residues 143 to 359 (PLDPRFTFDT…GALNRLIAHA (217 aa)) are domain III, AAA+ region. ATP contacts are provided by glycine 188, glycine 190, lysine 191, and threonine 192. A domain IV, binds dsDNA region spans residues 360-479 (DLVGRPVTLD…VELLRRMLEG (120 aa)).

This sequence belongs to the DnaA family. Oligomerizes as a right-handed, spiral filament on DNA at oriC.

It localises to the cytoplasm. In terms of biological role, plays an essential role in the initiation and regulation of chromosomal replication. ATP-DnaA binds to the origin of replication (oriC) to initiate formation of the DNA replication initiation complex once per cell cycle. Binds the DnaA box (a 9 base pair repeat at the origin) and separates the double-stranded (ds)DNA. Forms a right-handed helical filament on oriC DNA; dsDNA binds to the exterior of the filament while single-stranded (ss)DNA is stabiized in the filament's interior. The ATP-DnaA-oriC complex binds and stabilizes one strand of the AT-rich DNA unwinding element (DUE), permitting loading of DNA polymerase. After initiation quickly degrades to an ADP-DnaA complex that is not apt for DNA replication. Binds acidic phospholipids. This chain is Chromosomal replication initiator protein DnaA, found in Gluconobacter oxydans (strain 621H) (Gluconobacter suboxydans).